The chain runs to 878 residues: Phosphoenolpyruvate carboxylase (878 aa).

Catalysis depends on residues H137 and K545.

It belongs to the PEPCase type 1 family. Requires Mg(2+) as cofactor.

It carries out the reaction oxaloacetate + phosphate = phosphoenolpyruvate + hydrogencarbonate. In terms of biological role, forms oxaloacetate, a four-carbon dicarboxylic acid source for the tricarboxylic acid cycle. In Yersinia pestis bv. Antiqua (strain Antiqua), this protein is Phosphoenolpyruvate carboxylase.